Here is a 334-residue protein sequence, read N- to C-terminus: WD repeat-containing protein 54 (334 aa).

WD repeat units follow at residues 116-155 (SSVQ…PNIV), 162-206 (GHQT…TLLT), and 250-289 (AHAR…ESGS).

In terms of assembly, homodimer and homotrimer; forms tight forms of dimers and trimers. Interacts with IZUMO1 and IZUMO1R/JUNO. Post-translationally, cross-linked to tightly form both dimers and trimers by TGM2. Cross-linking enhances the activation of EGF receptor-mediated signaling pathway. Cross-linking is inhibited by EGF. In terms of processing, ubiquitinated. EGF increases ubiquitination.

The protein localises to the vesicle. It is found in the cytoplasm. It localises to the cell membrane. Functionally, plays a role in the adhesion and fusion of the sperm-oocyte membrane through its interactions with IZUMO1 and IZUMO1R/JUNO. When cross-linked to form dimers and trimers, it has a regulatory effect on ERK signaling pathway activity in response to EGF stimulation. Colocalizes with the EGF receptor in WDR54-specific vesicle where it sustains the internalization and controls the degradation of the EGF receptor after EGF stimulation. In Mus musculus (Mouse), this protein is WD repeat-containing protein 54.